The primary structure comprises 340 residues: Protein-arginine kinase (340 aa).

The Phosphagen kinase C-terminal domain occupies 21–242 (VVLSSRIRLA…EQIIMQERVA (222 aa)). ATP-binding positions include 24–28 (SSRIR), His-79, Arg-113, 164–168 (RASVM), and 195–200 (RGIYGE).

The protein belongs to the ATP:guanido phosphotransferase family.

The catalysed reaction is L-arginyl-[protein] + ATP = N(omega)-phospho-L-arginyl-[protein] + ADP + H(+). Functionally, catalyzes the specific phosphorylation of arginine residues in proteins. The polypeptide is Protein-arginine kinase (Listeria monocytogenes serotype 4b (strain CLIP80459)).